Here is a 574-residue protein sequence, read N- to C-terminus: MRTSQYLLSTLKEVPADAEVVSHQLMLRAGMIRKLASGLYSWLPTGLRVLRKVENIVREEMDNAGAIEVSMPVVQPADLWQESGRWVQYGPELLRFTDRGARAFVLGPTHEEVITDLIRNEVSSYKQLPLNFYQIQTKFRDEVRPRFGVMRSREFVMKDAYSFHTSQASLQATYDAMYQAYSAIFTRMGLEFRAVQADTGSIGGSASHEFQVLAGSGEDDIVFSTASDYAANIELAEAVAPAAARAAPGEDMRLVNTPDARTIAELVAQFSLPVEKTVKTLLVRAREDAGHPLVALMVRGDHHLNDVKAEKLPQVAAPLTFASEEEIRLAVGAGPGSLGPVNLPLPLVIDRSVAVMSDFAAGANAEGKHFFGINWERDLPLPQVADLRKVVEGDISPDGNGTLQIKRGIEVGHIFQLGTKYSEAMKATVQGEDGRNQTLTMGCYGIGITRVVVAAIEQNHDDRGILWPETLAPFNVAILPMNMHKSFRVKEVAEDLYQQLQARGIDVLLDDRKERPGVMFADMELIGVPHQLVIGDRNLDTEEIEYKNRRSGEKRMIKLSAIVDFLVSEIATAK.

The protein belongs to the class-II aminoacyl-tRNA synthetase family. ProS type 1 subfamily. Homodimer.

It is found in the cytoplasm. It carries out the reaction tRNA(Pro) + L-proline + ATP = L-prolyl-tRNA(Pro) + AMP + diphosphate. In terms of biological role, catalyzes the attachment of proline to tRNA(Pro) in a two-step reaction: proline is first activated by ATP to form Pro-AMP and then transferred to the acceptor end of tRNA(Pro). As ProRS can inadvertently accommodate and process non-cognate amino acids such as alanine and cysteine, to avoid such errors it has two additional distinct editing activities against alanine. One activity is designated as 'pretransfer' editing and involves the tRNA(Pro)-independent hydrolysis of activated Ala-AMP. The other activity is designated 'posttransfer' editing and involves deacylation of mischarged Ala-tRNA(Pro). The misacylated Cys-tRNA(Pro) is not edited by ProRS. This is Proline--tRNA ligase from Sodalis glossinidius (strain morsitans).